We begin with the raw amino-acid sequence, 453 residues long: Bifunctional protein GlmU (453 aa).

The tract at residues Met1–Arg226 is pyrophosphorylase. Residues Leu7–Gly10, Lys21, Gln73, and Gly78–Thr79 contribute to the UDP-N-acetyl-alpha-D-glucosamine site. Asp103 is a Mg(2+) binding site. UDP-N-acetyl-alpha-D-glucosamine contacts are provided by Gly140, Glu155, Asn170, and Asn224. Asn224 is a binding site for Mg(2+). A linker region spans residues Ala227–Lys247. The interval Gly248 to Gln453 is N-acetyltransferase. UDP-N-acetyl-alpha-D-glucosamine contacts are provided by Arg329 and Lys347. The active-site Proton acceptor is His359. Residues Tyr362 and Asn373 each contribute to the UDP-N-acetyl-alpha-D-glucosamine site. Residues Ala376, Ala419, and Arg436 each contribute to the acetyl-CoA site.

The protein in the N-terminal section; belongs to the N-acetylglucosamine-1-phosphate uridyltransferase family. This sequence in the C-terminal section; belongs to the transferase hexapeptide repeat family. In terms of assembly, homotrimer. Mg(2+) serves as cofactor.

The protein resides in the cytoplasm. It carries out the reaction alpha-D-glucosamine 1-phosphate + acetyl-CoA = N-acetyl-alpha-D-glucosamine 1-phosphate + CoA + H(+). The catalysed reaction is N-acetyl-alpha-D-glucosamine 1-phosphate + UTP + H(+) = UDP-N-acetyl-alpha-D-glucosamine + diphosphate. It functions in the pathway nucleotide-sugar biosynthesis; UDP-N-acetyl-alpha-D-glucosamine biosynthesis; N-acetyl-alpha-D-glucosamine 1-phosphate from alpha-D-glucosamine 6-phosphate (route II): step 2/2. Its pathway is nucleotide-sugar biosynthesis; UDP-N-acetyl-alpha-D-glucosamine biosynthesis; UDP-N-acetyl-alpha-D-glucosamine from N-acetyl-alpha-D-glucosamine 1-phosphate: step 1/1. It participates in bacterial outer membrane biogenesis; LPS lipid A biosynthesis. Catalyzes the last two sequential reactions in the de novo biosynthetic pathway for UDP-N-acetylglucosamine (UDP-GlcNAc). The C-terminal domain catalyzes the transfer of acetyl group from acetyl coenzyme A to glucosamine-1-phosphate (GlcN-1-P) to produce N-acetylglucosamine-1-phosphate (GlcNAc-1-P), which is converted into UDP-GlcNAc by the transfer of uridine 5-monophosphate (from uridine 5-triphosphate), a reaction catalyzed by the N-terminal domain. This Prochlorococcus marinus (strain MIT 9211) protein is Bifunctional protein GlmU.